Consider the following 218-residue polypeptide: Adenylate kinase (218 aa).

Residue G10–T15 participates in ATP binding. Residues S30–V59 form an NMP region. Residues T31, R36, Q57 to V59, G85 to R88, and Q92 contribute to the AMP site. An LID region spans residues G122 to D159. ATP is bound by residues R123 and T132–Y133. The disordered stretch occupies residues P127–G150. Positions 156 and 167 each coordinate AMP. Residue G203 participates in ATP binding.

The protein belongs to the adenylate kinase family. As to quaternary structure, monomer.

Its subcellular location is the cytoplasm. It carries out the reaction AMP + ATP = 2 ADP. Its pathway is purine metabolism; AMP biosynthesis via salvage pathway; AMP from ADP: step 1/1. In terms of biological role, catalyzes the reversible transfer of the terminal phosphate group between ATP and AMP. Plays an important role in cellular energy homeostasis and in adenine nucleotide metabolism. This Acidovorax ebreus (strain TPSY) (Diaphorobacter sp. (strain TPSY)) protein is Adenylate kinase.